Here is a 93-residue protein sequence, read N- to C-terminus: Small ribosomal subunit protein uS19 (93 aa).

It belongs to the universal ribosomal protein uS19 family.

Functionally, protein S19 forms a complex with S13 that binds strongly to the 16S ribosomal RNA. This chain is Small ribosomal subunit protein uS19, found in Saccharopolyspora erythraea (strain ATCC 11635 / DSM 40517 / JCM 4748 / NBRC 13426 / NCIMB 8594 / NRRL 2338).